The sequence spans 373 residues: Chaperone protein DnaJ (373 aa).

Residues aspartate 5–glycine 70 form the J domain. Residues glycine 134–valine 212 form a CR-type zinc finger. 8 residues coordinate Zn(2+): cysteine 147, cysteine 150, cysteine 164, cysteine 167, cysteine 186, cysteine 189, cysteine 200, and cysteine 203. CXXCXGXG motif repeat units lie at residues cysteine 147–glycine 154, cysteine 164–glycine 171, cysteine 186–glycine 193, and cysteine 200–glycine 207.

This sequence belongs to the DnaJ family. As to quaternary structure, homodimer. Zn(2+) serves as cofactor.

It is found in the cytoplasm. Its function is as follows. Participates actively in the response to hyperosmotic and heat shock by preventing the aggregation of stress-denatured proteins and by disaggregating proteins, also in an autonomous, DnaK-independent fashion. Unfolded proteins bind initially to DnaJ; upon interaction with the DnaJ-bound protein, DnaK hydrolyzes its bound ATP, resulting in the formation of a stable complex. GrpE releases ADP from DnaK; ATP binding to DnaK triggers the release of the substrate protein, thus completing the reaction cycle. Several rounds of ATP-dependent interactions between DnaJ, DnaK and GrpE are required for fully efficient folding. Also involved, together with DnaK and GrpE, in the DNA replication of plasmids through activation of initiation proteins. This is Chaperone protein DnaJ from Neisseria gonorrhoeae (strain ATCC 700825 / FA 1090).